The following is a 533-amino-acid chain: UDP-glucuronosyltransferase 1A1 (533 aa).

The signal sequence occupies residues 1–25 (MAVESQGGRPLVLGLLLCVLGPVVS). Asn-102, Asn-295, and Asn-347 each carry an N-linked (GlcNAc...) asparagine glycan. The chain crosses the membrane as a helical span at residues 491-507 (VIGFLLAVVLTVAFITF).

This sequence belongs to the UDP-glycosyltransferase family. Homodimer. Homooligomer. Interacts with UGT1A3, UGT1A4, UGT1A6, UGT1A7, UGT1A8, UGT1A9 and UGT1A10 to form heterodimers. Isoform 1 interacts with isoform 2/i2 suggesting that oligomerization is involved in negative regulation of transferase activity by isoform 2. Isoform 1 also interacts with respective i2 isoforms of UGT1A3, UGT1A4, UGT1A6, UGT1A7, UGT1A8, UGT1A9 and UGT1A10. Expressed in liver, colon and small intestine. Not expressed in kidney, esophagus and skin. In terms of tissue distribution, expressed in liver, colon, small intestine and kidney. Not expressed in esophagus and skin.

The protein localises to the endoplasmic reticulum membrane. It is found in the cytoplasm. It localises to the perinuclear region. The catalysed reaction is glucuronate acceptor + UDP-alpha-D-glucuronate = acceptor beta-D-glucuronoside + UDP + H(+). It carries out the reaction 17beta-estradiol + UDP-alpha-D-glucuronate = 17beta-estradiol 3-O-(beta-D-glucuronate) + UDP + H(+). It catalyses the reaction 2-hydroxyestrone + UDP-alpha-D-glucuronate = 2-hydroxyestrone 3-O-(beta-D-glucuronate) + UDP + H(+). The enzyme catalyses 2-hydroxy-17beta-estradiol + UDP-alpha-D-glucuronate = 2-hydroxy-17beta-estradiol 3-O-(beta-D-glucuronate) + UDP + H(+). The catalysed reaction is 2-methoxy-17beta-estradiol + UDP-alpha-D-glucuronate = 2-methoxy-17beta-estradiol 3-O-(beta-D-glucuronate) + UDP + H(+). It carries out the reaction 17alpha-estradiol + UDP-alpha-D-glucuronate = 17alpha-estradiol 3-O-(beta-D-glucuronate) + UDP + H(+). It catalyses the reaction 16beta,17beta-estriol + UDP-alpha-D-glucuronate = 16beta,17beta-estriol 16-O-(beta-D-glucuronate) + UDP + H(+). The enzyme catalyses losartan + UDP-alpha-D-glucuronate = losartan-2-N-beta-D-glucuronide + UDP. The catalysed reaction is prunetin + UDP-alpha-D-glucuronate = prunetin-4'-O-beta-D-glucuronide + UDP. It carries out the reaction SN-38 + UDP-alpha-D-glucuronate = SN-38 O-beta-D-glucuronide + UDP + H(+). It catalyses the reaction (4Z,15Z)-bilirubin IXalpha + UDP-alpha-D-glucuronate = (4Z,15Z)-bilirubin IXalpha C12-beta-D-glucuronoside + UDP. The enzyme catalyses (4Z,15Z)-bilirubin IXalpha + UDP-alpha-D-glucuronate = (4Z,15Z)-bilirubin IXalpha C8-beta-D-glucuronoside + UDP. The catalysed reaction is (4Z,15Z)-bilirubin IXalpha C8-beta-D-glucuronoside + UDP-alpha-D-glucuronate = (4Z,15Z)-bilirubin IXalpha C8,C12-beta-D-bisglucuronoside + UDP. It carries out the reaction (4Z,15Z)-bilirubin IXalpha C12-beta-D-glucuronoside + UDP-alpha-D-glucuronate = (4Z,15Z)-bilirubin IXalpha C8,C12-beta-D-bisglucuronoside + UDP. It catalyses the reaction 8-iso-prostaglandin F2alpha + UDP-alpha-D-glucuronate = 8-iso-prostaglandin F2alpha-glucuronide + UDP + H(+). The enzyme catalyses (5Z,8Z,11Z,14Z)-eicosatetraenoate + UDP-alpha-D-glucuronate = O-[(5Z),(8Z),(11Z),(14Z)-eicosatetraenoyl]-beta-D-glucuronate + UDP. The catalysed reaction is 15-hydroxy-(5Z,8Z,11Z,13E)-eicosatetraenoate + UDP-alpha-D-glucuronate = 15-O-(beta-D-glucuronosyl)-(5Z,8Z,11Z,14Z)-eicosatetraenoate + UDP + H(+). It carries out the reaction 20-hydroxy-(5Z,8Z,11Z,14Z)-eicosatetraenoate + UDP-alpha-D-glucuronate = 20-O-(beta-D-glucuronosyl)-(5Z,8Z,11Z,14Z)-eicosatetraenoate + UDP + H(+). It catalyses the reaction prostaglandin B1 + UDP-alpha-D-glucuronate = 15-O-(beta-D-glucuronosyl)-prostaglandin B1 + UDP + H(+). The enzyme catalyses (E)-ferulate + UDP-alpha-D-glucuronate = (E)-4-O-(beta-D-glucuronosyl)-ferulate + UDP + H(+). The catalysed reaction is (E)-ferulate + UDP-alpha-D-glucuronate = (E)-ferulic acid beta-D-glucuronate ester + UDP. UDP-glucuronosyltransferase (UGT) that catalyzes phase II biotransformation reactions in which lipophilic substrates are conjugated with glucuronic acid to increase the metabolite's water solubility, thereby facilitating excretion into either the urine or bile. Essential for the elimination and detoxification of drugs, xenobiotics and endogenous compounds. Catalyzes the glucuronidation of endogenous estrogen hormones such as estradiol, estrone and estriol. Involved in the glucuronidation of bilirubin, a degradation product occurring in the normal catabolic pathway that breaks down heme in vertebrates. Involved in the glucuronidation of arachidonic acid (AA) and AA-derived eicosanoids including 15-HETE, 20-HETE, PGB1 and F2-isoprostane (8-iso-PGF2alpha). Involved in the glucuronidation of the phytochemical ferulic acid at the phenolic or the carboxylic acid group. Also catalyzes the glucuronidation the isoflavones genistein, daidzein, glycitein, formononetin, biochanin A and prunetin, which are phytoestrogens with anticancer and cardiovascular properties. Involved in the glucuronidation of the AGTR1 angiotensin receptor antagonist losartan, a drug which can inhibit the effect of angiotensin II. Involved in the biotransformation of 7-ethyl-10-hydroxycamptothecin (SN-38), the pharmacologically active metabolite of the anticancer drug irinotecan. Its function is as follows. Lacks UGT glucuronidation activity but acts as a negative regulator of isoform 1. The polypeptide is UDP-glucuronosyltransferase 1A1 (Homo sapiens (Human)).